A 127-amino-acid polypeptide reads, in one-letter code: Small ribosomal subunit protein uS11 (127 aa).

This sequence belongs to the universal ribosomal protein uS11 family. As to quaternary structure, part of the 30S ribosomal subunit. Interacts with proteins S7 and S18. Binds to IF-3.

Located on the platform of the 30S subunit, it bridges several disparate RNA helices of the 16S rRNA. Forms part of the Shine-Dalgarno cleft in the 70S ribosome. The polypeptide is Small ribosomal subunit protein uS11 (Streptococcus pyogenes serotype M1).